The sequence spans 104 residues: Ig lambda-2 chain C region (104 aa).

Positions Pro-6 to Ser-99 constitute an Ig-like domain. Residues Cys-27 and Cys-85 are joined by a disulfide bond.

In Rattus norvegicus (Rat), this protein is Ig lambda-2 chain C region.